The primary structure comprises 72 residues: BBSome-interacting protein 1 (72 aa).

This sequence belongs to the BBIP10 family.

It is found in the cell projection. The protein localises to the cilium. It localises to the cytoplasm. In terms of biological role, required for primary cilia assembly. This Danio rerio (Zebrafish) protein is BBSome-interacting protein 1 (bbip1).